We begin with the raw amino-acid sequence, 155 residues long: Small ribosomal subunit protein uS7 (155 aa).

Belongs to the universal ribosomal protein uS7 family. Part of the 30S ribosomal subunit. Contacts proteins S9 and S11.

One of the primary rRNA binding proteins, it binds directly to 16S rRNA where it nucleates assembly of the head domain of the 30S subunit. Is located at the subunit interface close to the decoding center, probably blocks exit of the E-site tRNA. The polypeptide is Small ribosomal subunit protein uS7 (Ureaplasma parvum serovar 3 (strain ATCC 27815 / 27 / NCTC 11736)).